Reading from the N-terminus, the 400-residue chain is NAD-dependent protein deacetylase sirtuin-7 (400 aa).

The tract at residues 1–27 is disordered; the sequence is MAAGGLSRSERKAAERVRRLREEQQRE. A compositionally biased stretch (basic and acidic residues) spans 8–27; that stretch reads RSERKAAERVRRLREEQQRE. In terms of domain architecture, Deacetylase sirtuin-type spans 82-329; it reads PEELRGKVRE…RLLMAELGLE (248 aa). Residues 107 to 126 and 167 to 170 contribute to the NAD(+) site; these read GAGI…NGVW and QNCD. Catalysis depends on H187, which acts as the Proton acceptor. Residues C195, C198, C225, and C228 each contribute to the Zn(2+) site. Residues 268–270, 297–299, and C315 contribute to the NAD(+) site; these read GSS and NLQ. Residues 354 to 380 form a disordered region; that stretch reads SHSRKSLCRSREEAPPGDRGAPLSSAP. Residue R388 is modified to Asymmetric dimethylarginine; alternate. Omega-N-methylarginine; alternate is present on R388.

Belongs to the sirtuin family. Class IV subfamily. In terms of assembly, interacts with UBTF and the RNA polymerase I complex. Interacts with components of the B-WICH complex, such as MYBBP1A, SMARCA5/SNF2H and BAZ1B/WSTF. Interacts with ELK4, leading to stabilization at target promoters for H3K18Ac deacetylation. Interacts with histone H2A and/or histone H2B. Interacts with DNMT1. Interacts with SIRT1. The cofactor is Zn(2+). Phosphorylated during mitosis. Post-translationally, methylation at Arg-388 by PRMT6 inhibits the H3K18Ac histone deacetylase activity, promoting mitochondria biogenesis and maintaining mitochondria respiration. In terms of processing, ubiquitinated via 'Lys-63'-linked ubiquitin chains. Deubiquitinated by USP7, inhibiting the H3K18Ac histone deacetylase activity and regulating gluconeogenesis. Ubiquitinated by E3 ubiquitin-protein ligase complex containing FBXO7; leading to proteasomal degradation.

Its subcellular location is the nucleus. It is found in the nucleolus. The protein localises to the nucleoplasm. The protein resides in the chromosome. It localises to the cytoplasm. It carries out the reaction N(6)-acetyl-L-lysyl-[protein] + NAD(+) + H2O = 2''-O-acetyl-ADP-D-ribose + nicotinamide + L-lysyl-[protein]. It catalyses the reaction N(6)-glutaryl-L-lysyl-[protein] + NAD(+) + H2O = 2''-O-glutaryl-ADP-D-ribose + nicotinamide + L-lysyl-[protein]. The enzyme catalyses N(6)-succinyl-L-lysyl-[protein] + NAD(+) + H2O = 2''-O-succinyl-ADP-D-ribose + nicotinamide + L-lysyl-[protein]. The catalysed reaction is N(6)-propanoyl-L-lysyl-[protein] + NAD(+) + H2O = 3''-O-propanoyl-ADP-D-ribose + nicotinamide + L-lysyl-[protein]. It carries out the reaction N(6)-decanoyl-L-lysyl-[protein] + NAD(+) + H2O = 2''-O-decanoyl-ADP-D-ribose + nicotinamide + L-lysyl-[protein]. Its activity is regulated as follows. NAD-dependent protein-lysine deacetylase and deacylase activities are activated by nucleic acids. Histone deacetylase activity is activated by DNA and nucleosomes. Protein-lysine deacylase activity is activated by RNA. H3K18Ac histone deacetylase activity is inhibited by methylation at Arg-388. H3K18Ac histone deacetylase activity is inhibited by deubiquitination by USP7. Functionally, NAD-dependent protein-lysine deacylase that can act both as a deacetylase or deacylase (desuccinylase, depropionylase, deglutarylase and dedecanoylase), depending on the context. Specifically mediates deacetylation of histone H3 at 'Lys-18' (H3K18Ac). In contrast to other histone deacetylases, displays strong preference for a specific histone mark, H3K18Ac, directly linked to control of gene expression. H3K18Ac is mainly present around the transcription start site of genes and has been linked to activation of nuclear hormone receptors; SIRT7 thereby acts as a transcription repressor. Moreover, H3K18 hypoacetylation has been reported as a marker of malignancy in various cancers and seems to maintain the transformed phenotype of cancer cells. Also able to mediate deacetylation of histone H3 at 'Lys-36' (H3K36Ac) in the context of nucleosomes. Also mediates deacetylation of non-histone proteins, such as ATM, CDK9, DDX21, DDB1, FBL, FKBP5/FKBP51, GABPB1, RAN, RRP9/U3-55K and POLR1E/PAF53. Enriched in nucleolus where it stimulates transcription activity of the RNA polymerase I complex. Acts by mediating the deacetylation of the RNA polymerase I subunit POLR1E/PAF53, thereby promoting the association of RNA polymerase I with the rDNA promoter region and coding region. In response to metabolic stress, SIRT7 is released from nucleoli leading to hyperacetylation of POLR1E/PAF53 and decreased RNA polymerase I transcription. Required to restore the transcription of ribosomal RNA (rRNA) at the exit from mitosis. Promotes pre-ribosomal RNA (pre-rRNA) cleavage at the 5'-terminal processing site by mediating deacetylation of RRP9/U3-55K, a core subunit of the U3 snoRNP complex. Mediates 'Lys-37' deacetylation of Ran, thereby regulating the nuclear export of NF-kappa-B subunit RELA/p65. Acts as a regulator of DNA damage repair by mediating deacetylation of ATM during the late stages of DNA damage response, promoting ATM dephosphorylation and deactivation. Suppresses the activity of the DCX (DDB1-CUL4-X-box) E3 ubiquitin-protein ligase complexes by mediating deacetylation of DDB1, which prevents the interaction between DDB1 and CUL4 (CUL4A or CUL4B). Activates RNA polymerase II transcription by mediating deacetylation of CDK9, thereby promoting 'Ser-2' phosphorylation of the C-terminal domain (CTD) of RNA polymerase II. Deacetylates FBL, promoting histone-glutamine methyltransferase activity of FBL. Acts as a regulator of mitochondrial function by catalyzing deacetylation of GABPB1. Regulates Akt/AKT1 activity by mediating deacetylation of FKBP5/FKBP51. Required to prevent R-loop-associated DNA damage and transcription-associated genomic instability by mediating deacetylation and subsequent activation of DDX21, thereby overcoming R-loop-mediated stalling of RNA polymerases. In addition to protein deacetylase activity, also acts as a protein-lysine deacylase. Acts as a protein depropionylase by mediating depropionylation of Osterix (SP7), thereby regulating bone formation by osteoblasts. Acts as a histone deglutarylase by mediating deglutarylation of histone H4 on 'Lys-91' (H4K91glu); a mark that destabilizes nucleosomes by promoting dissociation of the H2A-H2B dimers from nucleosomes. Acts as a histone desuccinylase: in response to DNA damage, recruited to DNA double-strand breaks (DSBs) and catalyzes desuccinylation of histone H3 on 'Lys-122' (H3K122succ), thereby promoting chromatin condensation and DSB repair. Also promotes DSB repair by promoting H3K18Ac deacetylation, regulating non-homologous end joining (NHEJ). Along with its role in DNA repair, required for chromosome synapsis during prophase I of female meiosis by catalyzing H3K18Ac deacetylation. Involved in transcriptional repression of LINE-1 retrotransposon via H3K18Ac deacetylation, and promotes their association with the nuclear lamina. Required to stabilize ribosomal DNA (rDNA) heterochromatin and prevent cellular senescence induced by rDNA instability. Acts as a negative regulator of SIRT1 by preventing autodeacetylation of SIRT1, restricting SIRT1 deacetylase activity. The chain is NAD-dependent protein deacetylase sirtuin-7 from Homo sapiens (Human).